We begin with the raw amino-acid sequence, 284 residues long: Tropomyosin (284 aa).

Residues 1-284 are a coiled coil; that stretch reads MEAIKKKMQA…DQTFAELTGY (284 aa).

Belongs to the tropomyosin family. Homodimer.

Tropomyosin, in association with the troponin complex, plays a central role in the calcium dependent regulation of muscle contraction. In Dermatophagoides farinae (American house dust mite), this protein is Tropomyosin.